The chain runs to 921 residues: Valine--tRNA ligase (921 aa).

The short motif at 40 to 50 is the 'HIGH' region element; it reads PNVTGSLHMGH. Positions 522–526 match the 'KMSKS' region motif; it reads KMSKS. Lys-525 lines the ATP pocket. A coiled-coil region spans residues 849–921; the sequence is MADLIDKEAE…LQHKNRIESL (73 aa).

Belongs to the class-I aminoacyl-tRNA synthetase family. ValS type 1 subfamily. In terms of assembly, monomer.

It is found in the cytoplasm. The enzyme catalyses tRNA(Val) + L-valine + ATP = L-valyl-tRNA(Val) + AMP + diphosphate. In terms of biological role, catalyzes the attachment of valine to tRNA(Val). As ValRS can inadvertently accommodate and process structurally similar amino acids such as threonine, to avoid such errors, it has a 'posttransfer' editing activity that hydrolyzes mischarged Thr-tRNA(Val) in a tRNA-dependent manner. The polypeptide is Valine--tRNA ligase (Legionella pneumophila (strain Lens)).